The chain runs to 166 residues: Ribosome maturation factor RimM (166 aa).

A PRC barrel domain is found at 95–164 (EEEYYAYELV…KKIIVKEELL (70 aa)).

It belongs to the RimM family. As to quaternary structure, binds ribosomal protein uS19.

It is found in the cytoplasm. Its function is as follows. An accessory protein needed during the final step in the assembly of 30S ribosomal subunit, possibly for assembly of the head region. Essential for efficient processing of 16S rRNA. May be needed both before and after RbfA during the maturation of 16S rRNA. It has affinity for free ribosomal 30S subunits but not for 70S ribosomes. The polypeptide is Ribosome maturation factor RimM (Aquifex aeolicus (strain VF5)).